Reading from the N-terminus, the 760-residue chain is RxLR effector protein PSR2 (760 aa).

The N-terminal stretch at 1-21 is a signal peptide; it reads MGCRYAVLALAVAYFAGSIAA. The RxLR-dEER motif lies at 47–62; the sequence is RFLRAANTADERNEDR. The stretch at 87–134 is one WY1 repeat; that stretch reads PLLSWFEKKKSPDYVFLKLKINKGKQQLFDHPDWNVWVQYTTSVVKSD. The tract at residues 87-760 is 7 X 93 AA tandem repeats; that stretch reads PLLSWFEKKK…TTKYMERYGQ (674 aa). The stretch at 135 to 221 is one LWY2 repeat; sequence PEEAMIAALR…MKLYNSKPVN (87 aa). One copy of the LWY3 repeat lies at 222–312; sequence KKQQVTLVSM…KYVDNYNRDF (91 aa). The stretch at 313–403 is one LWY4 repeat; that stretch reads PDEATTVMAT…KYVEDLNLKP (91 aa). Residues 404 to 496 form an LWY5 repeat; sequence EHNDLQVSII…KFLEHYYKSF (93 aa). One copy of the LWY6 repeat lies at 497-584; sequence PTPMMSALAK…RYLDEFNKKF (88 aa). One copy of the LWY7 repeat lies at 585 to 760; the sequence is PDEKVSMTDT…TTKYMERYGQ (176 aa).

This sequence belongs to the RxLR effector family. In terms of assembly, interacts with host dsRNA-binding protein DRB4.

Its subcellular location is the secreted. The protein localises to the host cell. Its function is as follows. Secreted effector that possesses RNA silencing suppression activity by inhibiting the biogenesis of small RNAs in the host plant to promote enhanced susceptibility of host to the pathogen during infection. Interferes with secondary siRNA production by associating with host dsRNA-binding protein DRB4. Inhibits the host salicylic acid pathway during infection. The protein is RxLR effector protein PSR2 of Phytophthora infestans (strain T30-4) (Potato late blight agent).